Here is a 43-residue protein sequence, read N- to C-terminus: Jararafibrase-3 (43 aa).

The C-type lectin domain maps to 10 to 43 (MNGLYYKIFDELKAWKDAEMFCRKYKPGWHLASF).

This sequence belongs to the true venom lectin family. Monomer. In terms of tissue distribution, expressed by the venom gland.

The protein resides in the secreted. With respect to regulation, inhibited by 1,10-phenanthroline and EDTA. In terms of biological role, may have both metalloproteinase and lectin activities. Induces local hemorrhage in the skin of rats. Degrades type-IV collagen, gelatin, laminin and fibronectin. Has hemagglutinating activity on red blood cells. The chain is Jararafibrase-3 from Bothrops jararaca (Jararaca).